A 239-amino-acid polypeptide reads, in one-letter code: ATP-dependent dethiobiotin synthetase BioD (239 aa).

E15 to F20 contributes to the ATP binding site. T19 contacts Mg(2+). Residue K40 is part of the active site. ATP is bound by residues D57, E118–G121, N178–H179, and A211–L213. Mg(2+) contacts are provided by D57 and E118.

It belongs to the dethiobiotin synthetase family. As to quaternary structure, homodimer. Mg(2+) is required as a cofactor.

The protein localises to the cytoplasm. The enzyme catalyses (7R,8S)-7,8-diammoniononanoate + CO2 + ATP = (4R,5S)-dethiobiotin + ADP + phosphate + 3 H(+). The protein operates within cofactor biosynthesis; biotin biosynthesis; biotin from 7,8-diaminononanoate: step 1/2. Functionally, catalyzes a mechanistically unusual reaction, the ATP-dependent insertion of CO2 between the N7 and N8 nitrogen atoms of 7,8-diaminopelargonic acid (DAPA, also called 7,8-diammoniononanoate) to form a ureido ring. The protein is ATP-dependent dethiobiotin synthetase BioD of Burkholderia vietnamiensis (strain G4 / LMG 22486) (Burkholderia cepacia (strain R1808)).